A 365-amino-acid chain; its full sequence is tRNA-specific 2-thiouridylase MnmA (365 aa).

Residues 6–13 (AMSGGVDS) and leucine 32 contribute to the ATP site. Cysteine 101 acts as the Nucleophile in catalysis. A disulfide bridge connects residues cysteine 101 and cysteine 199. Residue glycine 125 participates in ATP binding. Positions 149-151 (KDQ) are interaction with tRNA. Cysteine 199 serves as the catalytic Cysteine persulfide intermediate.

This sequence belongs to the MnmA/TRMU family.

It is found in the cytoplasm. It carries out the reaction S-sulfanyl-L-cysteinyl-[protein] + uridine(34) in tRNA + AH2 + ATP = 2-thiouridine(34) in tRNA + L-cysteinyl-[protein] + A + AMP + diphosphate + H(+). Its function is as follows. Catalyzes the 2-thiolation of uridine at the wobble position (U34) of tRNA, leading to the formation of s(2)U34. This chain is tRNA-specific 2-thiouridylase MnmA, found in Corynebacterium efficiens (strain DSM 44549 / YS-314 / AJ 12310 / JCM 11189 / NBRC 100395).